The sequence spans 272 residues: Phosphatidylglycerol--prolipoprotein diacylglyceryl transferase (272 aa).

Transmembrane regions (helical) follow at residues 17 to 37 (LQVH…WGLA), 55 to 75 (LVFY…VLFY), 90 to 110 (VWTG…AMLF), 125 to 145 (FIAP…FIGG), 174 to 194 (PSQI…LWWF), 202 to 222 (MAVS…MEFF), and 230 to 250 (GFIL…MLLI). Position 138 (Arg-138) interacts with a 1,2-diacyl-sn-glycero-3-phospho-(1'-sn-glycerol).

It belongs to the Lgt family.

It is found in the cell inner membrane. It catalyses the reaction L-cysteinyl-[prolipoprotein] + a 1,2-diacyl-sn-glycero-3-phospho-(1'-sn-glycerol) = an S-1,2-diacyl-sn-glyceryl-L-cysteinyl-[prolipoprotein] + sn-glycerol 1-phosphate + H(+). It functions in the pathway protein modification; lipoprotein biosynthesis (diacylglyceryl transfer). Its function is as follows. Catalyzes the transfer of the diacylglyceryl group from phosphatidylglycerol to the sulfhydryl group of the N-terminal cysteine of a prolipoprotein, the first step in the formation of mature lipoproteins. The polypeptide is Phosphatidylglycerol--prolipoprotein diacylglyceryl transferase (Acinetobacter baumannii (strain ACICU)).